The primary structure comprises 134 residues: Small ribosomal subunit protein uS9c (134 aa).

The protein belongs to the universal ribosomal protein uS9 family.

It localises to the plastid. The protein localises to the chloroplast. The polypeptide is Small ribosomal subunit protein uS9c (rps9) (Euglena gracilis).